We begin with the raw amino-acid sequence, 518 residues long: Nicotine N-demethylase CYP82E3 (518 aa).

Residues 2–22 (VFPVEAIVGLVTFTFLFYFLW) traverse the membrane as a helical segment. Residue Lys-254 forms a Glycyl lysine isopeptide (Lys-Gly) (interchain with G-Cter in ubiquitin) linkage. Position 458 (Cys-458) interacts with heme.

Belongs to the cytochrome P450 family. CYP82E2 subfamily. Heme serves as cofactor. In terms of tissue distribution, expressed in leaves.

It localises to the membrane. It carries out the reaction (S)-nicotine + reduced [NADPH--hemoprotein reductase] + O2 = (S)-nornicotine + formaldehyde + oxidized [NADPH--hemoprotein reductase] + H2O + H(+). It functions in the pathway alkaloid biosynthesis; nicotine biosynthesis. In terms of biological role, involved in the biosynthesis of pyridine alkaloid natural products, leading mainly to the production of anabasine, anatabine, nicotine and nornicotine, effective deterrents against herbivores with antiparasitic and pesticide properties (neurotoxins); nornicotine serves as the precursor in the synthesis of the carcinogen compound N'-nitrosonornicotine (NNN). Catalyzes the demethylation of nicotine to form nornicotine. The polypeptide is Nicotine N-demethylase CYP82E3 (Nicotiana tomentosiformis (Tobacco)).